We begin with the raw amino-acid sequence, 274 residues long: 2,3,4,5-tetrahydropyridine-2,6-dicarboxylate N-succinyltransferase (274 aa).

It belongs to the transferase hexapeptide repeat family.

It is found in the cytoplasm. The enzyme catalyses (S)-2,3,4,5-tetrahydrodipicolinate + succinyl-CoA + H2O = (S)-2-succinylamino-6-oxoheptanedioate + CoA. The protein operates within amino-acid biosynthesis; L-lysine biosynthesis via DAP pathway; LL-2,6-diaminopimelate from (S)-tetrahydrodipicolinate (succinylase route): step 1/3. The sequence is that of 2,3,4,5-tetrahydropyridine-2,6-dicarboxylate N-succinyltransferase from Salmonella heidelberg (strain SL476).